We begin with the raw amino-acid sequence, 141 residues long: Putative pre-16S rRNA nuclease (141 aa).

This sequence belongs to the YqgF nuclease family.

The protein resides in the cytoplasm. Could be a nuclease involved in processing of the 5'-end of pre-16S rRNA. This is Putative pre-16S rRNA nuclease from Roseiflexus sp. (strain RS-1).